The primary structure comprises 788 residues: Protein translocase subunit SecA 2 (788 aa).

ATP-binding positions include Gln77, 95–99 (GEGKT), and Asp491.

The protein belongs to the SecA family. In terms of assembly, monomer and homodimer. Part of the essential Sec protein translocation apparatus which comprises SecA, SecYEG and auxiliary proteins SecDF. Other proteins may also be involved.

It is found in the cell membrane. It localises to the cytoplasm. The enzyme catalyses ATP + H2O + cellular proteinSide 1 = ADP + phosphate + cellular proteinSide 2.. Its function is as follows. Part of the Sec protein translocase complex. Interacts with the SecYEG preprotein conducting channel. Has a central role in coupling the hydrolysis of ATP to the transfer of proteins into and across the cell membrane, serving as an ATP-driven molecular motor driving the stepwise translocation of polypeptide chains across the membrane. The chain is Protein translocase subunit SecA 2 from Lactobacillus johnsonii (strain CNCM I-12250 / La1 / NCC 533).